A 389-amino-acid chain; its full sequence is MIVEPKFRGFICTTSHPIGCKKNVENQIEYVKENGKIEGAKRVLVLGASTGYGLASAIVASEACDAEVLGVSFEREAKGKRTASAGWYNIESLKKFVEGEGKKFISVNGDAFSNEVKSEVIDLIKENMGKVDLVIYSLAAPKRKDPVSGEVYSSCLKTVGAPFTSKTLDFHTGEIQDITINPATEEEIEGTRKVMGGEDWMLWIEALKEANVLENGVKTIAYSYIGPEVTYPIYREGTIGRAKNDLEKTAGEITKVLKSLNGEGYISVNKALVTQASSAIPIVSLYISILYKVMKEKGTHEGCIEQIYRMFKELYEGNLNLDSENRIRIDDLEMAEDVQKAIEEIWPQITSENVFELSDAEDFKKEFFKLFGFGLEGVDYSEDVDITTV.

Residues 47-52, 73-74, 110-111, and 138-139 each bind NAD(+); these read GASTGY, FE, DA, and LA. Residue Y224 participates in substrate binding. Y234 serves as the catalytic Proton donor. NAD(+) contacts are provided by residues K243 and 272-274; that span reads LVT.

The protein belongs to the TER reductase family. As to quaternary structure, monomer.

The enzyme catalyses a 2,3-saturated acyl-CoA + NAD(+) = a (2E)-enoyl-CoA + NADH + H(+). The protein operates within lipid metabolism; fatty acid biosynthesis. Functionally, involved in the fatty acid synthesis (FAS II). Catalyzes the reduction of a carbon-carbon double bond in an enoyl moiety that is covalently linked to a coenzyme A (CoA). The polypeptide is Trans-2-enoyl-CoA reductase [NADH] (Clostridium perfringens (strain SM101 / Type A)).